The primary structure comprises 92 residues: Small ribosomal subunit protein uS19 (92 aa).

This sequence belongs to the universal ribosomal protein uS19 family.

In terms of biological role, protein S19 forms a complex with S13 that binds strongly to the 16S ribosomal RNA. The sequence is that of Small ribosomal subunit protein uS19 from Jannaschia sp. (strain CCS1).